Here is a 434-residue protein sequence, read N- to C-terminus: Alpha-enolase (434 aa).

Ser40 contacts Mg(2+). Positions 158 and 167 each coordinate substrate. Glu210 acts as the Proton donor in catalysis. Positions 245, 293, and 318 each coordinate Mg(2+). Substrate contacts are provided by Glu293 and Asp318. The active-site Proton acceptor is the Lys343. Residues 370–373 (SHRS) and Lys394 contribute to the substrate site.

Belongs to the enolase family. In terms of assembly, homodimer. Mg(2+) is required as a cofactor.

Its subcellular location is the cytoplasm. The catalysed reaction is (2R)-2-phosphoglycerate = phosphoenolpyruvate + H2O. Its pathway is carbohydrate degradation; glycolysis; pyruvate from D-glyceraldehyde 3-phosphate: step 4/5. The protein is Alpha-enolase (ENO1) of Gallus gallus (Chicken).